The sequence spans 350 residues: S-adenosylmethionine:tRNA ribosyltransferase-isomerase (350 aa).

Belongs to the QueA family. In terms of assembly, monomer.

It is found in the cytoplasm. It carries out the reaction 7-aminomethyl-7-carbaguanosine(34) in tRNA + S-adenosyl-L-methionine = epoxyqueuosine(34) in tRNA + adenine + L-methionine + 2 H(+). The protein operates within tRNA modification; tRNA-queuosine biosynthesis. Transfers and isomerizes the ribose moiety from AdoMet to the 7-aminomethyl group of 7-deazaguanine (preQ1-tRNA) to give epoxyqueuosine (oQ-tRNA). The sequence is that of S-adenosylmethionine:tRNA ribosyltransferase-isomerase from Bacillus cytotoxicus (strain DSM 22905 / CIP 110041 / 391-98 / NVH 391-98).